A 558-amino-acid chain; its full sequence is Phosphatase and actin regulator 3 (558 aa).

The segment covering Met1–Leu11 has biased composition (polar residues). Disordered stretches follow at residues Met1–Thr69, Lys81–Pro288, and Leu300–Met366. A compositionally biased stretch (low complexity) spans Gln18–Asp33. Position 69 is a phosphothreonine (Thr69). Residues Ser92–Glu117 form an RPEL 1 repeat. Residues Leu94–Ile108 are compositionally biased toward basic and acidic residues. The segment covering Glu144–Leu169 has biased composition (polar residues). The segment covering Pro228–Lys239 has biased composition (pro residues). Residue Ser229 is modified to Phosphoserine. A Phosphothreonine modification is found at Thr235. Composition is skewed to basic and acidic residues over residues Leu300–Ala341 and Ala354–Glu363. RPEL repeat units follow at residues Glu400–Thr425, Met438–Asn463, and Gln476–Ser501. The stretch at Ala449–Arg485 forms a coiled coil.

The protein belongs to the phosphatase and actin regulator family. As to quaternary structure, binds PPP1CA and actin; thus inhibiting the protein phosphatase 1 (PP1) activity.

The protein resides in the nucleus matrix. The chain is Phosphatase and actin regulator 3 (Phactr3) from Mus musculus (Mouse).